A 250-amino-acid chain; its full sequence is Transmembrane ascorbate-dependent reductase CYB561 (250 aa).

Position 1 is an N-acetylmethionine (Met1). The Cytoplasmic portion of the chain corresponds to 1 to 15 (MEHSSASVPAALPYY). The chain crosses the membrane as a helical span at residues 16–36 (VAFSQLLGLTVVAVTGAWLGL). The Cytochrome b561 domain maps to 18-219 (FSQLLGLTVV…FGVVVLYILA (202 aa)). The Vesicular portion of the chain corresponds to 37–50 (YRGGIAWESSLQFN). Residues 51–71 (VHPLCMVIGMIFLQGDALLVY) form a helical membrane-spanning segment. Heme b is bound by residues His52, Arg72, and Lys79. The Cytoplasmic portion of the chain corresponds to 72-83 (RVFRREAKRTTK). L-ascorbate contacts are provided by Lys79 and Lys83. A helical transmembrane segment spans residues 84-104 (ILHGLLHVFAFIIALVGLVAV). Heme b contacts are provided by residues His86, 115-118 (DLYS), and His120. At 105 to 123 (FDYHKKKGYADLYSLHSWC) the chain is on the vesicular side. Residues 124–144 (GILVFVLYFVQWLVGFSFFLF) traverse the membrane as a helical segment. The Cytoplasmic portion of the chain corresponds to 145–157 (PGASFSLRSRYRP). Arg152 contacts L-ascorbate. A helical membrane pass occupies residues 158–178 (QHIFFGATIFLFSVGTALLGL). The heme b site is built by His159 and Glu180. Residues 179–197 (KEALLFKLGSKYSTFEPEG) are Vesicular-facing. Residues 198-218 (VLANVLGLLLVCFGVVVLYIL) traverse the membrane as a helical segment. Residues 219 to 250 (AQADWKRPSQAEEQALSMDFKTLTEGDSPSPQ) are Cytoplasmic-facing. Lys224 is a binding site for heme b. Ser246 and Ser248 each carry phosphoserine.

The cofactor is heme b. Abundantly distributed in a number of neuroendocrine tissues.

The protein resides in the cytoplasmic vesicle. Its subcellular location is the secretory vesicle. It localises to the chromaffin granule membrane. The catalysed reaction is monodehydro-L-ascorbate radical(out) + L-ascorbate(in) = monodehydro-L-ascorbate radical(in) + L-ascorbate(out). Functionally, transmembrane reductase that uses ascorbate as an electron donor in the cytoplasm and transfers electrons across membranes to reduce monodehydro-L-ascorbate radical in the lumen of secretory vesicles. It is therefore involved the regeneration and homeostasis within secretory vesicles of ascorbate which in turn provides reducing equivalents needed to support the activity of intravesicular enzymes. The sequence is that of Transmembrane ascorbate-dependent reductase CYB561 from Mus musculus (Mouse).